The sequence spans 196 residues: Flagellin B2 (196 aa).

A propeptide spanning residues 1–12 is cleaved from the precursor; the sequence is MFEFITDEDERG.

The protein belongs to the archaeal flagellin family. Post-translationally, glycosylated.

The protein resides in the archaeal flagellum. Flagellin is the subunit protein which polymerizes to form the filaments of archaeal flagella. In Halobacterium salinarum (strain ATCC 700922 / JCM 11081 / NRC-1) (Halobacterium halobium), this protein is Flagellin B2 (flaB2).